Reading from the N-terminus, the 1372-residue chain is Cell fusion protein fus1 (1372 aa).

Residues 104–522 (LCPDDPNLVN…EQGNNAPGYS (419 aa)) form the GBD/FH3 domain. The SH3-binding signature appears at 802–817 (PFKAPPPAPLPPPAPP). Residues 868 to 1278 (PGELCNPSKR…AFLRLQALKA (411 aa)) form the FH2 domain.

This sequence belongs to the formin homology family. BNI1 subfamily. As to quaternary structure, interacts with actin at the FH2 domain.

The protein localises to the cytoplasm. Its function is as follows. Required for cell fusion. It associates with the pre-zygotic projection tips in conjugating cells. This chain is Cell fusion protein fus1 (fus1), found in Schizosaccharomyces pombe (strain 972 / ATCC 24843) (Fission yeast).